A 1101-amino-acid polypeptide reads, in one-letter code: Nuclear pore complex protein NUP107 (1101 aa).

The protein belongs to the nucleoporin Nup84/Nup107 family. Part of the nuclear pore complex (NPC). The NPC has an eight-fold symmetrical structure comprising a central transport channel and two rings, the cytoplasmic and nuclear rings, to which eight filaments are attached. The cytoplasmic filaments have loose ends, while the nuclear filaments are joined in a distal ring, forming a nuclear basket. NPCs are highly dynamic in configuration and composition, and can be devided in 3 subcomplexes, the NUP62 subcomplex, the NUP107-160 subcomplex and the NUP93 subcomplex, containing approximately 30 different nucleoporin proteins.

It localises to the nucleus envelope. Its subcellular location is the nucleus. The protein localises to the nuclear pore complex. The sequence is that of Nuclear pore complex protein NUP107 from Arabidopsis thaliana (Mouse-ear cress).